A 123-amino-acid polypeptide reads, in one-letter code: Neuropeptide-like peptides nlp-40 (123 aa).

Residues 1-17 (MKLVILLSFVATVAVFA) form the signal peptide. 3 propeptides span residues 30–31 (RA), 66–67 (KR), and 75–76 (KR).

Expressed in intestinal cells.

The protein resides in the secreted. It localises to the cytoplasmic vesicle. Its function is as follows. Neuropeptide ligand for the G-protein coupled receptor aex-2. Activates and regulates the rhythmic calcium influx in DVB GABergic neurons during the defecation motor program, which is a coordinated series of three muscle contractions that occurs every 45 seconds. In Caenorhabditis elegans, this protein is Neuropeptide-like peptides nlp-40.